A 1147-amino-acid polypeptide reads, in one-letter code: Nucleolar protein 8 (1147 aa).

The region spanning K8–E89 is the RRM domain. A Glycyl lysine isopeptide (Lys-Gly) (interchain with G-Cter in SUMO2) cross-link involves residue K225. Phosphoserine is present on residues S300 and S306. K316 participates in a covalent cross-link: Glycyl lysine isopeptide (Lys-Gly) (interchain with G-Cter in SUMO2). A Phosphotyrosine modification is found at Y362. A phosphoserine mark is found at S364 and S365. T367 carries the post-translational modification Phosphothreonine. The segment at K379–K401 is disordered. Positions S383–Q400 are enriched in polar residues. Phosphoserine is present on S416. Disordered regions lie at residues K427–K452, A472–N511, M592–A659, K686–Q741, A766–E888, K932–L963, and S986–C1017. The span at D441–E450 shows a compositional bias: acidic residues. Composition is skewed to polar residues over residues M592 to Q610 and T629 to P650. Composition is skewed to basic and acidic residues over residues S700 to Q714 and A732 to Q741. S704 bears the Phosphoserine mark. At T777 the chain carries Phosphothreonine. Phosphoserine is present on residues S783 and S787. The segment covering C799 to V809 has biased composition (basic and acidic residues). A phosphoserine mark is found at S819, S820, S825, S827, and S872. Over residues S857–K883 the composition is skewed to basic and acidic residues. 2 coiled-coil regions span residues L868–N898 and I937–L963. The segment covering D994–N1011 has biased composition (basic and acidic residues). A Glycyl lysine isopeptide (Lys-Gly) (interchain with G-Cter in SUMO2) cross-link involves residue K1038. Positions P1055–P1086 are disordered. S1063, S1064, S1065, and S1080 each carry phosphoserine.

Interacts with the GTP form of RRAGA, RRAGC and RRAGD. Interacts with NIP7. Interacts with DDX18; the interaction is RNA-dependent. Interacts with DDX47; the interaction is RNA-dependent. In terms of processing, phosphorylated.

Its subcellular location is the nucleus. The protein localises to the nucleolus. Plays an essential role in the survival of diffuse-type gastric cancer cells. Acts as a nucleolar anchoring protein for DDX47. May be involved in regulation of gene expression at the post-transcriptional level or in ribosome biogenesis in cancer cells. This chain is Nucleolar protein 8, found in Mus musculus (Mouse).